The following is a 346-amino-acid chain: Holliday junction branch migration complex subunit RuvB (346 aa).

The large ATPase domain (RuvB-L) stretch occupies residues 2-183 (TDDRIIGAGA…FGIVQRLEFY (182 aa)). ATP is bound by residues I22, R23, G64, K67, T68, T69, 130-132 (EDF), R173, Y183, and R220. T68 provides a ligand contact to Mg(2+). Positions 184–254 (SVEELTRIVR…VAQAAMKMLK (71 aa)) are small ATPAse domain (RuvB-S). A head domain (RuvB-H) region spans residues 257 to 346 (PEGFDELDRR…DLFAEVPDVG (90 aa)). R293, R312, and R317 together coordinate DNA.

This sequence belongs to the RuvB family. In terms of assembly, homohexamer. Forms an RuvA(8)-RuvB(12)-Holliday junction (HJ) complex. HJ DNA is sandwiched between 2 RuvA tetramers; dsDNA enters through RuvA and exits via RuvB. An RuvB hexamer assembles on each DNA strand where it exits the tetramer. Each RuvB hexamer is contacted by two RuvA subunits (via domain III) on 2 adjacent RuvB subunits; this complex drives branch migration. In the full resolvosome a probable DNA-RuvA(4)-RuvB(12)-RuvC(2) complex forms which resolves the HJ.

It localises to the cytoplasm. The catalysed reaction is ATP + H2O = ADP + phosphate + H(+). Its function is as follows. The RuvA-RuvB-RuvC complex processes Holliday junction (HJ) DNA during genetic recombination and DNA repair, while the RuvA-RuvB complex plays an important role in the rescue of blocked DNA replication forks via replication fork reversal (RFR). RuvA specifically binds to HJ cruciform DNA, conferring on it an open structure. The RuvB hexamer acts as an ATP-dependent pump, pulling dsDNA into and through the RuvAB complex. RuvB forms 2 homohexamers on either side of HJ DNA bound by 1 or 2 RuvA tetramers; 4 subunits per hexamer contact DNA at a time. Coordinated motions by a converter formed by DNA-disengaged RuvB subunits stimulates ATP hydrolysis and nucleotide exchange. Immobilization of the converter enables RuvB to convert the ATP-contained energy into a lever motion, pulling 2 nucleotides of DNA out of the RuvA tetramer per ATP hydrolyzed, thus driving DNA branch migration. The RuvB motors rotate together with the DNA substrate, which together with the progressing nucleotide cycle form the mechanistic basis for DNA recombination by continuous HJ branch migration. Branch migration allows RuvC to scan DNA until it finds its consensus sequence, where it cleaves and resolves cruciform DNA. In Stenotrophomonas maltophilia (strain R551-3), this protein is Holliday junction branch migration complex subunit RuvB.